Here is a 295-residue protein sequence, read N- to C-terminus: Diaminopimelate epimerase (295 aa).

Positions 13, 46, and 66 each coordinate substrate. The active-site Proton donor is C75. Residues 76-77 (GN), N162, N195, and 213-214 (ER) each bind substrate. Residue C222 is the Proton acceptor of the active site. 223-224 (GT) contacts substrate.

Belongs to the diaminopimelate epimerase family. Homodimer.

It is found in the cytoplasm. It catalyses the reaction (2S,6S)-2,6-diaminopimelate = meso-2,6-diaminopimelate. It participates in amino-acid biosynthesis; L-lysine biosynthesis via DAP pathway; DL-2,6-diaminopimelate from LL-2,6-diaminopimelate: step 1/1. Its function is as follows. Catalyzes the stereoinversion of LL-2,6-diaminopimelate (L,L-DAP) to meso-diaminopimelate (meso-DAP), a precursor of L-lysine and an essential component of the bacterial peptidoglycan. This chain is Diaminopimelate epimerase, found in Psychrobacter cryohalolentis (strain ATCC BAA-1226 / DSM 17306 / VKM B-2378 / K5).